Consider the following 102-residue polypeptide: MNVAEFHQNIDQLWDSIEEQLEAQDADADCDRQGSVFTITFDDRSQIVVNKQEPLLELWLASRLGGLHFAWKNNDWVNGQGVRFWDALTEACQAHGEQVSFI.

This sequence belongs to the frataxin family.

Its function is as follows. Involved in iron-sulfur (Fe-S) cluster assembly. May act as a regulator of Fe-S biogenesis. This chain is Iron-sulfur cluster assembly protein CyaY, found in Actinobacillus succinogenes (strain ATCC 55618 / DSM 22257 / CCUG 43843 / 130Z).